A 192-amino-acid chain; its full sequence is Fe/S biogenesis protein NfuA (192 aa).

Positions 150 and 153 each coordinate [4Fe-4S] cluster.

Belongs to the NfuA family. In terms of assembly, homodimer. The cofactor is [4Fe-4S] cluster.

Involved in iron-sulfur cluster biogenesis. Binds a 4Fe-4S cluster, can transfer this cluster to apoproteins, and thereby intervenes in the maturation of Fe/S proteins. Could also act as a scaffold/chaperone for damaged Fe/S proteins. The chain is Fe/S biogenesis protein NfuA from Buchnera aphidicola subsp. Acyrthosiphon pisum (strain APS) (Acyrthosiphon pisum symbiotic bacterium).